The following is a 446-amino-acid chain: Probable glycine dehydrogenase (decarboxylating) subunit 1 (446 aa).

The protein belongs to the GcvP family. N-terminal subunit subfamily. As to quaternary structure, the glycine cleavage system is composed of four proteins: P, T, L and H. In this organism, the P 'protein' is a heterodimer of two subunits.

It catalyses the reaction N(6)-[(R)-lipoyl]-L-lysyl-[glycine-cleavage complex H protein] + glycine + H(+) = N(6)-[(R)-S(8)-aminomethyldihydrolipoyl]-L-lysyl-[glycine-cleavage complex H protein] + CO2. Functionally, the glycine cleavage system catalyzes the degradation of glycine. The P protein binds the alpha-amino group of glycine through its pyridoxal phosphate cofactor; CO(2) is released and the remaining methylamine moiety is then transferred to the lipoamide cofactor of the H protein. The polypeptide is Probable glycine dehydrogenase (decarboxylating) subunit 1 (Thermococcus onnurineus (strain NA1)).